Reading from the N-terminus, the 142-residue chain is Deoxyuridine 5'-triphosphate nucleotidohydrolase (142 aa).

Substrate is bound by residues 62–64 (RSG), N75, and 79–81 (TID).

It belongs to the dUTPase family. Mg(2+) serves as cofactor.

The catalysed reaction is dUTP + H2O = dUMP + diphosphate + H(+). It functions in the pathway pyrimidine metabolism; dUMP biosynthesis; dUMP from dCTP (dUTP route): step 2/2. Its function is as follows. This enzyme is involved in nucleotide metabolism: it produces dUMP, the immediate precursor of thymidine nucleotides and it decreases the intracellular concentration of dUTP so that uracil cannot be incorporated into DNA. This Crocosphaera subtropica (strain ATCC 51142 / BH68) (Cyanothece sp. (strain ATCC 51142)) protein is Deoxyuridine 5'-triphosphate nucleotidohydrolase.